Reading from the N-terminus, the 100-residue chain is NADH-quinone oxidoreductase subunit K (100 aa).

Transmembrane regions (helical) follow at residues 4 to 24 (LSWY…GFVI), 29 to 49 (IVML…FASF), and 60 to 80 (IFVL…LAIV).

The protein belongs to the complex I subunit 4L family. NDH-1 is composed of 14 different subunits. Subunits NuoA, H, J, K, L, M, N constitute the membrane sector of the complex.

It localises to the cell inner membrane. It carries out the reaction a quinone + NADH + 5 H(+)(in) = a quinol + NAD(+) + 4 H(+)(out). Functionally, NDH-1 shuttles electrons from NADH, via FMN and iron-sulfur (Fe-S) centers, to quinones in the respiratory chain. The immediate electron acceptor for the enzyme in this species is believed to be ubiquinone. Couples the redox reaction to proton translocation (for every two electrons transferred, four hydrogen ions are translocated across the cytoplasmic membrane), and thus conserves the redox energy in a proton gradient. In Thermodesulfovibrio yellowstonii (strain ATCC 51303 / DSM 11347 / YP87), this protein is NADH-quinone oxidoreductase subunit K.